The following is a 121-amino-acid chain: C-type natriuretic peptide 4 (121 aa).

Residues 1–22 form the signal peptide; the sequence is MNLSYLVACGLLVTFLSDKMDA. Positions 23-96 are excised as a propeptide; it reads QPLTPAQQKS…SRRHKSGSKK (74 aa). Residues 80–109 are disordered; that stretch reads LLNDQPASRRHKSGSKKGGSTSRSGCFGHK. A disulfide bridge links Cys-105 with Cys-121.

It belongs to the natriuretic peptide family. Brain, spinal cord, spleen, heart and fin, and to a lower extent in gill and ovary.

The protein localises to the secreted. Its function is as follows. Exhibits natriuretic and vasodepressant activity. Has cGMP-stimulating activity. May help to regulate body fluid homeostasis in a variety of aquatic environments. The protein is C-type natriuretic peptide 4 of Oryzias latipes (Japanese rice fish).